Consider the following 409-residue polypeptide: uncharacterized protein (409 aa).

An N-terminal signal peptide occupies residues 1 to 39 (MVSDSKLELPLPVNQQKPRRRRILKVHLLIAALILSAVG). Zn(2+)-binding residues include H67, D69, E181, H250, and H271.

The protein belongs to the metallo-dependent hydrolases superfamily. Peptidase M19 family. In terms of assembly, interacts with dil1. Requires Zn(2+) as cofactor.

It catalyses the reaction an L-aminoacyl-L-amino acid + H2O = 2 an L-alpha-amino acid. This is an uncharacterized protein from Schizosaccharomyces pombe (strain 972 / ATCC 24843) (Fission yeast).